The primary structure comprises 519 residues: Acetylcholine receptor subunit gamma (519 aa).

A signal peptide spans 1–22; the sequence is MCGGQRPLFLLPLLAVCLGAKG. Over 23–240 the chain is Extracellular; that stretch reads RNQEERLLGD…VVFYLLIQRK (218 aa). Asparagine 52 and asparagine 163 each carry an N-linked (GlcNAc...) asparagine glycan. Cysteine 150 and cysteine 164 form a disulfide bridge. Helical transmembrane passes span 241-265, 274-292, and 308-329; these read PLFY…IYFL, CTVA…FLVA, and YLTF…VLNV. Residues 330 to 476 lie on the Cytoplasmic side of the membrane; the sequence is SLRSPHTHSM…WFLVGRVLDR (147 aa). Residues 477 to 497 form a helical membrane-spanning segment; that stretch reads VCFLAMLSLFVCGTAGIFLMA.

The protein belongs to the ligand-gated ion channel (TC 1.A.9) family. Acetylcholine receptor (TC 1.A.9.1) subfamily. Gamma/CHRNG sub-subfamily. As to quaternary structure, pentamer of two alpha chains, and one each of the beta, delta, and gamma (in immature muscle) or epsilon (in mature muscle) chains.

Its subcellular location is the postsynaptic cell membrane. The protein resides in the cell membrane. The catalysed reaction is K(+)(in) = K(+)(out). It catalyses the reaction Na(+)(in) = Na(+)(out). Functionally, after binding acetylcholine, the AChR responds by an extensive change in conformation that affects all subunits and leads to opening of an ion-conducting channel across the plasma membrane. This is Acetylcholine receptor subunit gamma (CHRNG) from Bos taurus (Bovine).